Consider the following 521-residue polypeptide: MGFLIAYVFNLSPCSGDEMFETIGLAIIHFEGLNTNRVSKCNQNWHQESKQVAMELIQKVSQGLWELENCDTVNSVVVLGKEYPPVPEQRQEERHENGVNMFQHIFTRQGRWNEEFLADVHTRLHFTYRTRFVPIPRHPNGPSPMSISVMLRDNPLNVIENVLNNPDCFQTDIGWGCMIRTGQSLLANALQRACLGRDFRIDDNAANEHELRIIKWFEDDPKYPFSLHKFVQEGFSLSGKKPGEWFGPSATSRSIQALVAKFPACGIAHCVISTDSGDVYMDEVEPLFRADPSAAVLLLLCVRLGVDVVNEVYWEHIRHILSSEHSVGIAGGRPSSSLYFFGYQDEHLFYLDPHKPQLNLASYQQDLDLFRSVHTQRFNKVHMSDIDPSMLIGILLNGKDDWQLWQQHIASSQIIHLSDSKPVDLMLDHQLESAILGDRYLSEDGQGPSSKVDTGDYIDVGSFVPCTDSSCKINESEDEYQDVKCKNQRIVVVGETTTNGSPEVEVEKVLVEKETIPVRSK.

The active-site Nucleophile is cysteine 177. Catalysis depends on residues aspartate 352 and histidine 354.

Belongs to the peptidase C54 family.

The protein resides in the cytoplasm. Its subcellular location is the nucleus. The protein localises to the preautophagosomal structure. The enzyme catalyses [protein]-C-terminal L-amino acid-glycyl-phosphatidylethanolamide + H2O = [protein]-C-terminal L-amino acid-glycine + a 1,2-diacyl-sn-glycero-3-phosphoethanolamine. Functionally, cysteine protease that plays a key role in cytoplasm to vacuole transport (Cvt) and autophagy by mediating both proteolytic activation and delipidation of ATG8. Required for selective autophagic degradation of the nucleus (nucleophagy) as well as for mitophagy which contributes to regulate mitochondrial quantity and quality by eliminating the mitochondria to a basal level to fulfill cellular energy requirements and preventing excess ROS production. The protease activity is required for proteolytic activation of ATG8: cleaves the C-terminal amino acid of ATG8 to reveal a C-terminal glycine. ATG8 ubiquitin-like activity requires the exposure of the glycine at the C-terminus for its conjugation to phosphatidylethanolamine (PE) and its insertion to membranes, which is necessary for autophagy. The ATG8-PE conjugate mediates tethering between adjacent membranes and stimulates membrane hemifusion, leading to expansion of the autophagosomal membrane during autophagy. In addition to the protease activity, also catalyzes deconjugation of PE-conjugated forms of ATG8 during macroautophagy: ATG8 delipidation is required to release the protein from membranes, which facilitates multiple events during macroautophagy, and especially for efficient autophagosome biogenesis, the assembly of ATG9-containing tubulovesicular clusters into phagophores/autophagosomes, and for the disassembly of PAS-associated ATG components. ATG8 delipidation by ATG4 also recycles ATG8-PE generated on inappropriate membranes to maintain a reservoir of unlipidated ATG8 that is required for autophagosome formation at the PAS. The polypeptide is Probable cysteine protease ATG4 (ATG4) (Eremothecium gossypii (strain ATCC 10895 / CBS 109.51 / FGSC 9923 / NRRL Y-1056) (Yeast)).